Reading from the N-terminus, the 381-residue chain is Ceramide-binding protein svf-1 (381 aa).

Residues 1–18 are peripherally associates with membranes; it reads MFKWAQAALANVAGTKEP.

The protein belongs to the SVF1 family.

It localises to the golgi apparatus. The protein resides in the cis-Golgi network membrane. It is found in the endoplasmic reticulum membrane. Its subcellular location is the cytoplasm. The protein localises to the nucleus. Ceramide-binding protein that may transfer ceramides from the endoplasmic reticulum membrane to the cis-Golgi network membrane, and is thereby required for the biosynthesis of complex sphingolipids. In Neurospora crassa (strain ATCC 24698 / 74-OR23-1A / CBS 708.71 / DSM 1257 / FGSC 987), this protein is Ceramide-binding protein svf-1 (svf-1).